Here is a 500-residue protein sequence, read N- to C-terminus: Adenylosuccinate synthetase, chloroplastic (500 aa).

GTP contacts are provided by residues 87 to 93 (GDEGKGK) and 115 to 117 (GHT). The active-site Proton acceptor is D88. Mg(2+)-binding residues include D88 and G115. IMP is bound by residues 88 to 91 (DEGK), 113 to 116 (NAGH), T205, R219, Q299, T314, and R378. Residue H116 is the Proton donor of the active site. 374–380 (TTTGRPR) serves as a coordination point for substrate. Residues R380, 406–408 (KLD), and 489–491 (GIG) each bind GTP.

The protein belongs to the adenylosuccinate synthetase family. In terms of assembly, homodimer. Mg(2+) serves as cofactor.

The protein resides in the plastid. It is found in the chloroplast. The catalysed reaction is IMP + L-aspartate + GTP = N(6)-(1,2-dicarboxyethyl)-AMP + GDP + phosphate + 2 H(+). It participates in purine metabolism; AMP biosynthesis via de novo pathway; AMP from IMP: step 1/2. Its function is as follows. Plays an important role in the de novo pathway and in the salvage pathway of purine nucleotide biosynthesis. Catalyzes the first committed step in the biosynthesis of AMP from IMP. The protein is Adenylosuccinate synthetase, chloroplastic of Solanum bulbocastanum (Wild potato).